A 374-amino-acid polypeptide reads, in one-letter code: Cobalt-precorrin-5B C(1)-methyltransferase (374 aa).

The protein belongs to the CbiD family.

The enzyme catalyses Co-precorrin-5B + S-adenosyl-L-methionine = Co-precorrin-6A + S-adenosyl-L-homocysteine. It functions in the pathway cofactor biosynthesis; adenosylcobalamin biosynthesis; cob(II)yrinate a,c-diamide from sirohydrochlorin (anaerobic route): step 6/10. In terms of biological role, catalyzes the methylation of C-1 in cobalt-precorrin-5B to form cobalt-precorrin-6A. The polypeptide is Cobalt-precorrin-5B C(1)-methyltransferase (Synechococcus elongatus (strain ATCC 33912 / PCC 7942 / FACHB-805) (Anacystis nidulans R2)).